Reading from the N-terminus, the 325-residue chain is Cytochrome c1, heme protein, mitochondrial (325 aa).

The N-terminal 84 residues, 1 to 84, are a transit peptide targeting the mitochondrion; it reads MAAAAATLRG…AVALHSAVSA (84 aa). Over 85 to 281 the chain is Mitochondrial intermembrane; sequence SDLELHPPSY…TFLRWAAEPE (197 aa). Residues 108–209 enclose the Cytochrome c domain; sequence TSIRRGFQVY…IVRARHGGED (102 aa). Cys121, Cys124, His125, and Met244 together coordinate heme c. Residues 282–315 form a helical membrane-spanning segment; sequence HDHRKRMGLKMLLMMGLLLPLVYAMKRHKWSVLK. Topologically, residues 316 to 325 are mitochondrial matrix; it reads SRKLAYRPPK.

This sequence belongs to the cytochrome c family. Component of the ubiquinol-cytochrome c oxidoreductase (cytochrome b-c1 complex, complex III, CIII), a multisubunit enzyme composed of 11 subunits. The complex is composed of 3 respiratory subunits cytochrome b, cytochrome c1 and Rieske protein UQCRFS1, 2 core protein subunits UQCRC1/QCR1 and UQCRC2/QCR2, and 6 low-molecular weight protein subunits UQCRH/QCR6, UQCRB/QCR7, UQCRQ/QCR8, UQCR10/QCR9, UQCR11/QCR10 and subunit 9, the cleavage product of Rieske protein UQCRFS1. The complex exists as an obligatory dimer and forms supercomplexes (SCs) in the inner mitochondrial membrane with NADH-ubiquinone oxidoreductase (complex I, CI) and cytochrome c oxidase (complex IV, CIV), resulting in different assemblies (supercomplex SCI(1)III(2)IV(1) and megacomplex MCI(2)III(2)IV(2)). Interacts with FLVCR2; this interaction occurs in the absence of heme and is disrupted upon heme binding. The cofactor is heme c.

It localises to the mitochondrion inner membrane. The enzyme catalyses a quinol + 2 Fe(III)-[cytochrome c](out) = a quinone + 2 Fe(II)-[cytochrome c](out) + 2 H(+)(out). Component of the ubiquinol-cytochrome c oxidoreductase, a multisubunit transmembrane complex that is part of the mitochondrial electron transport chain which drives oxidative phosphorylation. The respiratory chain contains 3 multisubunit complexes succinate dehydrogenase (complex II, CII), ubiquinol-cytochrome c oxidoreductase (cytochrome b-c1 complex, complex III, CIII) and cytochrome c oxidase (complex IV, CIV), that cooperate to transfer electrons derived from NADH and succinate to molecular oxygen, creating an electrochemical gradient over the inner membrane that drives transmembrane transport and the ATP synthase. The cytochrome b-c1 complex catalyzes electron transfer from ubiquinol to cytochrome c, linking this redox reaction to translocation of protons across the mitochondrial inner membrane, with protons being carried across the membrane as hydrogens on the quinol. In the process called Q cycle, 2 protons are consumed from the matrix, 4 protons are released into the intermembrane space and 2 electrons are passed to cytochrome c. Cytochrome c1 is a catalytic core subunit containing a c-type heme. It transfers electrons from the [2Fe-2S] iron-sulfur cluster of the Rieske protein to cytochrome c. In Bos taurus (Bovine), this protein is Cytochrome c1, heme protein, mitochondrial (CYC1).